Here is a 31-residue protein sequence, read N- to C-terminus: Acetyl-CoA carboxylase (31 aa).

Residues 1-31 (RISSSVIAHKTQLDSGKREVYSSHMQLGGPK) are disordered. A compositionally biased stretch (basic and acidic residues) spans 11–21 (TQLDSGKREVY).

It catalyses the reaction hydrogencarbonate + acetyl-CoA + ATP = malonyl-CoA + ADP + phosphate + H(+). Its pathway is lipid metabolism; malonyl-CoA biosynthesis; malonyl-CoA from acetyl-CoA: step 1/1. This is Acetyl-CoA carboxylase from Catharanthus roseus (Madagascar periwinkle).